A 412-amino-acid polypeptide reads, in one-letter code: Transcription factor IIIA (412 aa).

The disordered stretch occupies residues 1 to 20; sequence MSESDETKSISSLISSSSSS. Over residues 9-20 the composition is skewed to low complexity; sequence SISSLISSSSSS. C2H2-type zinc fingers lie at residues 25–49, 55–79, 85–107, 111–136, 140–162, 169–194, and 197–219; these read YICTYEGCDKAYNRPSLLEQHLRTH, YKCTVEDCDKAFFRKSHLETHIVSH, FHCSVCGKGVNSRQHLKRHEITH, FKCTFENCQEAFYKHQSLRHHILSVH, LTCKQCNKVFTRPSKLAQHKLKH, YQCDHPGCFKNFQTWSVLQFHIKQSH, and LKCPKCGKGCVGKKGLSSHMLSH. The C2H2-type 8; degenerate zinc finger occupies 228 to 252; sequence WTCDYCDVGKFAKKNELVEHYNIFH. A disordered region spans residues 285 to 316; that stretch reads LETEKLKVEEDEEDEEDSLDEKRSDVRSDSMS. Positions 293–303 are enriched in acidic residues; that stretch reads EEDEEDEEDSL. Residues 345 to 369 form a C2H2-type 9 zinc finger; that stretch reads INCPKNNCDRMFSREYDLRRHLKWH.

The protein localises to the nucleus. Its function is as follows. Transcription factor required for transcription of 5S rRNA by RNA polymerase III. The polypeptide is Transcription factor IIIA (PZF1) (Candida albicans (strain SC5314 / ATCC MYA-2876) (Yeast)).